The sequence spans 302 residues: uncharacterized protein (302 aa).

9 helical membrane passes run 3–23 (ILGV…SDWF), 39–59 (FVIG…LTSA), 77–97 (SCIC…PIIV), 106–126 (LVYL…FSWI), 128–148 (GVVL…NGSA), 163–183 (FSLV…ELFV), 199–219 (VIGF…VSLA), 227–247 (GMVL…ALAV), and 254–274 (LPAE…LYLF).

The protein belongs to the Ca(2+):cation antiporter (CaCA) (TC 2.A.19) family.

The protein localises to the cell membrane. This is an uncharacterized protein from Methanocaldococcus jannaschii (strain ATCC 43067 / DSM 2661 / JAL-1 / JCM 10045 / NBRC 100440) (Methanococcus jannaschii).